The following is a 633-amino-acid chain: MSSSKSLYELKDLKNSSTEIHATGQDNEIEYFETGSNDRPSSQPHLGYEQHNTSAVRRFFDSFKRADQGPQDEVEATQMNDLTSAISPSSRQAQELEKNESSDNIGANTGHKSDSLKKTIQPRHVLMIALGTGIGTGLLVGNGTALVHAGPAGLLIGYAIMGSILYCIIQACGEMALVYSNLTGGYNAYPSFLVDDGFGFAVAWVYCLQWLCVCPLELVTASMTIKYWTTSVNPDVFVIIFYVLVITINIFGARGYAEAEFFFNCCKILMMTGFFILGIIIDVGGAGNDGFIGGKYWHDPGAFNGKHAIDRFKGVAATLVTAAFAFGGSEFIAITTAEQSNPRKAIPGAAKQMIYRILFLFLATIILLGFLVPYNSDQLLGSTGGGTKASPYVIAVASHGVRVVPHFINAVILLSVLSMANSSFYSSARLFLTLSEQGYAPKVFSYIDRAGRPLIAMGVSALFAVIAFCAASPKEEQVFTWLLAISGLSQLFTWTAICLSHLRFRRAMKVQGRSLGELGFKSQTGVWGSAYACIMMILILIAQFWVAIAPIGEGKLDAQAFFENYLAMPILIALYVGYKVWHKDWKLFIRADKIDLDSHRQIFDEELIKQEDEEYRERLRNGPYWKRVVAFWC.

Residues 1–124 (MSSSKSLYEL…SLKKTIQPRH (124 aa)) are Cytoplasmic-facing. Serine 6 is subject to Phosphoserine. A Glycyl lysine isopeptide (Lys-Gly) (interchain with G-Cter in ubiquitin) cross-link involves residue lysine 11. Disordered stretches follow at residues 32 to 52 (FETGSNDRPSSQPHLGYEQHN) and 86 to 116 (ISPSSRQAQELEKNESSDNIGANTGHKSDSL). Over residues 34–52 (TGSNDRPSSQPHLGYEQHN) the composition is skewed to polar residues. A helical transmembrane segment spans residues 125–145 (VLMIALGTGIGTGLLVGNGTA). Residues 146–148 (LVH) are Extracellular-facing. Residues 149-169 (AGPAGLLIGYAIMGSILYCII) form a helical membrane-spanning segment. Over 170 to 197 (QACGEMALVYSNLTGGYNAYPSFLVDDG) the chain is Cytoplasmic. The helical transmembrane segment at 198–218 (FGFAVAWVYCLQWLCVCPLEL) threads the bilayer. Residues 219–231 (VTASMTIKYWTTS) are Extracellular-facing. A helical transmembrane segment spans residues 232–252 (VNPDVFVIIFYVLVITINIFG). The Cytoplasmic portion of the chain corresponds to 253-260 (ARGYAEAE). A helical membrane pass occupies residues 261–281 (FFFNCCKILMMTGFFILGIII). Over 282-313 (DVGGAGNDGFIGGKYWHDPGAFNGKHAIDRFK) the chain is Extracellular. A helical transmembrane segment spans residues 314–334 (GVAATLVTAAFAFGGSEFIAI). The Cytoplasmic segment spans residues 335-352 (TTAEQSNPRKAIPGAAKQ). Residues 353-373 (MIYRILFLFLATIILLGFLVP) traverse the membrane as a helical segment. Topologically, residues 374–402 (YNSDQLLGSTGGGTKASPYVIAVASHGVR) are extracellular. The chain crosses the membrane as a helical span at residues 403–425 (VVPHFINAVILLSVLSMANSSFY). Over 426–452 (SSARLFLTLSEQGYAPKVFSYIDRAGR) the chain is Cytoplasmic. Residues 453-473 (PLIAMGVSALFAVIAFCAASP) form a helical membrane-spanning segment. Topologically, residues 474-477 (KEEQ) are extracellular. The chain crosses the membrane as a helical span at residues 478–498 (VFTWLLAISGLSQLFTWTAIC). Over 499 to 531 (LSHLRFRRAMKVQGRSLGELGFKSQTGVWGSAY) the chain is Cytoplasmic. The chain crosses the membrane as a helical span at residues 532–552 (ACIMMILILIAQFWVAIAPIG). At 553-560 (EGKLDAQA) the chain is on the extracellular side. A helical membrane pass occupies residues 561–581 (FFENYLAMPILIALYVGYKVW). At 582–633 (HKDWKLFIRADKIDLDSHRQIFDEELIKQEDEEYRERLRNGPYWKRVVAFWC) the chain is on the cytoplasmic side. A lipid anchor (S-palmitoyl cysteine) is attached at cysteine 633.

The protein belongs to the amino acid-polyamine-organocation (APC) superfamily. YAT (TC 2.A.3.10) family. Post-translationally, palmitoylated by PFA4.

The protein localises to the cell membrane. Its function is as follows. Broad substrate range permease which transports asparagine and glutamine with intermediate specificity. Also transports Ala, Cys, Gly, Ile, Leu, Met, Phe, Ser, Thr, Tyr and Val. Important for the utilization of amino acids as a nitrogen source. The sequence is that of General amino acid permease AGP1 (AGP1) from Saccharomyces cerevisiae (strain ATCC 204508 / S288c) (Baker's yeast).